Consider the following 403-residue polypeptide: S-adenosylmethionine synthase (403 aa).

H17 lines the ATP pocket. D19 serves as a coordination point for Mg(2+). E45 lines the K(+) pocket. L-methionine contacts are provided by E58 and Q104. Positions 104 to 114 are flexible loop; sequence QSPDIAQGVDT. ATP-binding positions include 179–181, 250–251, D259, 265–266, A282, and K286; these read DGK, KF, and RK. D259 contributes to the L-methionine binding site. Position 290 (K290) interacts with L-methionine.

It belongs to the AdoMet synthase family. As to quaternary structure, homotetramer; dimer of dimers. Mg(2+) serves as cofactor. The cofactor is K(+).

Its subcellular location is the cytoplasm. The catalysed reaction is L-methionine + ATP + H2O = S-adenosyl-L-methionine + phosphate + diphosphate. It functions in the pathway amino-acid biosynthesis; S-adenosyl-L-methionine biosynthesis; S-adenosyl-L-methionine from L-methionine: step 1/1. Catalyzes the formation of S-adenosylmethionine (AdoMet) from methionine and ATP. The overall synthetic reaction is composed of two sequential steps, AdoMet formation and the subsequent tripolyphosphate hydrolysis which occurs prior to release of AdoMet from the enzyme. This is S-adenosylmethionine synthase from Mycobacterium avium (strain 104).